Here is a 183-residue protein sequence, read N- to C-terminus: Nascent polypeptide-associated complex subunit beta (183 aa).

An NAC-A/B domain is found at 62–127 (GADDKKLQTT…GEEKELTELV (66 aa)). Residues 150 to 183 (QNMQKQAGTEGKKDEDEDDIPDLVEGENFESNVE) are disordered. A compositionally biased stretch (acidic residues) spans 164 to 183 (EDEDDIPDLVEGENFESNVE).

Belongs to the NAC-beta family. In terms of assembly, part of the nascent polypeptide-associated complex (NAC), consisting of egd2 and egd1. NAC associates with ribosomes via egd1.

The protein localises to the cytoplasm. It is found in the nucleus. Its function is as follows. Component of the nascent polypeptide-associated complex (NAC), a dynamic component of the ribosomal exit tunnel, protecting the emerging polypeptides from interaction with other cytoplasmic proteins to ensure appropriate nascent protein targeting. The NAC complex also promotes mitochondrial protein import by enhancing productive ribosome interactions with the outer mitochondrial membrane and blocks the inappropriate interaction of ribosomes translating non-secretory nascent polypeptides with translocation sites in the membrane of the endoplasmic reticulum. EGD1 may act as a transcription factor that exert a negative effect on the expression of several genes that are transcribed by RNA polymerase II. The protein is Nascent polypeptide-associated complex subunit beta (egd1) of Neosartorya fischeri (strain ATCC 1020 / DSM 3700 / CBS 544.65 / FGSC A1164 / JCM 1740 / NRRL 181 / WB 181) (Aspergillus fischerianus).